The sequence spans 259 residues: HTH-type transcriptional regulator TtgV (259 aa).

The HTH iclR-type domain occupies I14–P76. A DNA-binding region (H-T-H motif) is located at residues L36 to E59. Residues I89–R253 enclose the IclR-ED domain.

In terms of biological role, represses the expression of the ttgGHI and ttgVW operons. Binds to the ttgGHI / ttgVW intergenic region, probably preventing binding of RNA polymerase; ttgV dissociates from this region in the presence of 1-hexanol. In Pseudomonas putida (strain DOT-T1E), this protein is HTH-type transcriptional regulator TtgV (ttgV).